The sequence spans 332 residues: Invasin IpaD (332 aa).

Positions 1–25 (MNITTLTNSISTSSFSPNNTNGSST) are enriched in low complexity. The interval 1–43 (MNITTLTNSISTSSFSPNNTNGSSTETVNSDIKTTTSSHPVSS) is disordered. Polar residues predominate over residues 26–43 (ETVNSDIKTTTSSHPVSS). Residues 44 to 77 (LTMLNDTLHNIRTTNQALKKELSQKTLTKTSLEE) are a coiled coil. The tract at residues 192–267 (VNSLKKALEE…KSLDNLGGNG (76 aa)) is ipaB binding.

It belongs to the invasin protein D family.

The protein resides in the secreted. Its function is as follows. Required for bacterial invasion of host cells. Controls IpaB and IpaC secretion, and the efficiency with which they are physically inserted into target cell membranes. These proteins are exported via T3SS to form a pore in the host membrane that allows the translocation of the other effectors into the host cytoplasm. Along with IpaB, is essential for both blocking secretion through the Mxi/Spa translocon in the absence of a secretion-inducing signal, and for controlling the level of secretion in the presence of this signal. The polypeptide is Invasin IpaD (ipaD) (Shigella flexneri).